The chain runs to 103 residues: Large ribosomal subunit protein bL21 (103 aa).

Belongs to the bacterial ribosomal protein bL21 family. As to quaternary structure, part of the 50S ribosomal subunit. Contacts protein L20.

Functionally, this protein binds to 23S rRNA in the presence of protein L20. The protein is Large ribosomal subunit protein bL21 of Cupriavidus pinatubonensis (strain JMP 134 / LMG 1197) (Cupriavidus necator (strain JMP 134)).